The primary structure comprises 505 residues: T-cell activation GTPase-activating protein 1 (505 aa).

Disordered regions lie at residues aspartate 81–serine 147, glutamine 160–threonine 212, glutamine 242–isoleucine 293, arginine 311–serine 339, and lysine 414–serine 441. The span at serine 90–aspartate 102 shows a compositional bias: polar residues. Over residues glutamate 203–threonine 212 the composition is skewed to acidic residues. Positions serine 250–proline 262 are enriched in low complexity. Basic and acidic residues-rich tracts occupy residues lysine 283 to glutamate 292 and glutamate 318 to serine 336.

The polypeptide is T-cell activation GTPase-activating protein 1 (Tagap1) (Mus musculus (Mouse)).